The chain runs to 456 residues: Arginine biosynthesis bifunctional protein ArgJ, mitochondrial (456 aa).

The substrate site is built by T184, K213, T224, E311, N451, and T456. T224 (nucleophile) is an active-site residue.

The protein belongs to the ArgJ family. As to quaternary structure, heterodimer of an alpha and a beta chain. The alpha and beta chains are autoproteolytically processed from a single precursor protein within the mitochondrion.

Its subcellular location is the mitochondrion matrix. The catalysed reaction is N(2)-acetyl-L-ornithine + L-glutamate = N-acetyl-L-glutamate + L-ornithine. It catalyses the reaction L-glutamate + acetyl-CoA = N-acetyl-L-glutamate + CoA + H(+). It functions in the pathway amino-acid biosynthesis; L-arginine biosynthesis; L-ornithine and N-acetyl-L-glutamate from L-glutamate and N(2)-acetyl-L-ornithine (cyclic): step 1/1. It participates in amino-acid biosynthesis; L-arginine biosynthesis; N(2)-acetyl-L-ornithine from L-glutamate: step 1/4. Catalyzes two activities which are involved in the cyclic version of arginine biosynthesis: the synthesis of acetylglutamate from glutamate and acetyl-CoA, and of ornithine by transacetylation between acetylornithine and glutamate. The protein is Arginine biosynthesis bifunctional protein ArgJ, mitochondrial of Aspergillus oryzae (strain ATCC 42149 / RIB 40) (Yellow koji mold).